We begin with the raw amino-acid sequence, 644 residues long: Exoribonuclease 2 (644 aa).

Positions 189 to 516 (RQDLTALNFV…NHRLLKAVIK (328 aa)) constitute an RNB domain. Positions 561–643 (DTRFAAEIID…DTRSIIARPA (83 aa)) constitute an S1 motif domain.

This sequence belongs to the RNR ribonuclease family. RNase II subfamily.

It is found in the cytoplasm. It catalyses the reaction Exonucleolytic cleavage in the 3'- to 5'-direction to yield nucleoside 5'-phosphates.. Functionally, involved in mRNA degradation. Hydrolyzes single-stranded polyribonucleotides processively in the 3' to 5' direction. In Salmonella arizonae (strain ATCC BAA-731 / CDC346-86 / RSK2980), this protein is Exoribonuclease 2.